A 434-amino-acid chain; its full sequence is Protein HEAT INTOLERANT 4 (434 aa).

The Nuclear localization signal 1 motif lies at 1-8 (MKKGAKRK). The segment covering 1–15 (MKKGAKRKGVSKAGR) has biased composition (basic residues). The interval 1 to 131 (MKKGAKRKGV…PVPKAKKPRA (131 aa)) is disordered. A compositionally biased stretch (basic and acidic residues) spans 30-53 (ETTKTTQEESQQHEEEVVDEVKEN). The span at 54 to 82 (GEEEEAKGDQEEEEDAKPDSLEEDEENQE) shows a compositional bias: acidic residues. The span at 83 to 98 (DEVKAEEVKEEVEKKP) shows a compositional bias: basic and acidic residues. The Nuclear localization signal 2 motif lies at 95-102 (EKKPVARR). Over residues 99–110 (VARRGGKRKRAT) the composition is skewed to basic residues. Positions 111–122 (KKDTEIKDEKKP) are enriched in basic and acidic residues. Residues 363–394 (VKEQVRAAKKANREAKDARKKAIEEMSEDTKQ) are a coiled coil. The Nuclear localization signal 3 signature appears at 370–377 (AKKANREA).

It is found in the nucleus. The protein resides in the nucleolus. In terms of biological role, essential protein required for basal thermotolerance, especially during heat-induced chromocentre decondensation, thus regulating transcriptional gene silencing (TGS). The sequence is that of Protein HEAT INTOLERANT 4 from Arabidopsis thaliana (Mouse-ear cress).